Consider the following 300-residue polypeptide: Putative lysophosphatidic acid:oleoyl-CoA acyltransferase (300 aa).

A helical membrane pass occupies residues 32–52; the sequence is WILIVVVMILRVPLCIISVTL. The short motif at 115 to 120 is the HXXXXD motif element; that stretch reads HSSPLD.

The protein belongs to the 1-acyl-sn-glycerol-3-phosphate acyltransferase family.

It is found in the lipid droplet. The protein resides in the endoplasmic reticulum membrane. Its subcellular location is the golgi apparatus membrane. The catalysed reaction is a 1-acyl-sn-glycero-3-phosphate + an acyl-CoA = a 1,2-diacyl-sn-glycero-3-phosphate + CoA. Functionally, acyl-CoA-dependent lysophosphatidic acid acyltransferase with preference for oleoyl-CoA. Involved in triacylglyceride homeostasis and lipid droplet formation. Involved in vacuolar protein sorting. The protein is Putative lysophosphatidic acid:oleoyl-CoA acyltransferase (vps66) of Schizosaccharomyces pombe (strain 972 / ATCC 24843) (Fission yeast).